Consider the following 576-residue polypeptide: Probable lysosomal cobalamin transporter (576 aa).

A run of 10 helical transmembrane segments spans residues 8–28, 40–60, 98–118, 145–165, 188–208, 312–332, 347–367, 377–397, 419–439, and 503–523; these read LIWAVYAIVVAVLVMVASVFI, VVTFTCIVAITSLLATVLLLP, YLLYSLDAFLCLLAIPFVYFW, TISFIAIVVVLFIVGFLVPVA, VLTFTLGLLITMGLFLYILYT, LLGGIAILLITLMIWISMLLT, GYILSGIGVFNPINWIFVQSA, LTVVVLLLFGSSVVGISTIGI, LTTAMLMLTILALDYSIPMLV, and FFGTVFFWSQFIFLVIYLLVL. A disordered region spans residues 549 to 576; sequence RLLTSSARGVGDTYQSVGGRNNFSTRAG. Residues 561–576 show a composition bias toward polar residues; it reads TYQSVGGRNNFSTRAG. The N-linked (GlcNAc...) asparagine glycan is linked to Asn-570.

This sequence belongs to the LIMR family. LMBRD1 subfamily.

The protein resides in the lysosome membrane. In terms of biological role, probable lysosomal cobalamin transporter. Required to export cobalamin from lysosomes allowing its conversion to cofactors. In Aspergillus niger (strain ATCC MYA-4892 / CBS 513.88 / FGSC A1513), this protein is Probable lysosomal cobalamin transporter.